A 265-amino-acid chain; its full sequence is 4-diphosphocytidyl-2-C-methyl-D-erythritol kinase (265 aa).

Lys-8 is an active-site residue. 95 to 105 is a binding site for ATP; that stretch reads PIGAGLGGGSS. Residue Asp-135 is part of the active site.

This sequence belongs to the GHMP kinase family. IspE subfamily.

The enzyme catalyses 4-CDP-2-C-methyl-D-erythritol + ATP = 4-CDP-2-C-methyl-D-erythritol 2-phosphate + ADP + H(+). It participates in isoprenoid biosynthesis; isopentenyl diphosphate biosynthesis via DXP pathway; isopentenyl diphosphate from 1-deoxy-D-xylulose 5-phosphate: step 3/6. Functionally, catalyzes the phosphorylation of the position 2 hydroxy group of 4-diphosphocytidyl-2C-methyl-D-erythritol. The protein is 4-diphosphocytidyl-2-C-methyl-D-erythritol kinase of Ureaplasma urealyticum serovar 10 (strain ATCC 33699 / Western).